The sequence spans 279 residues: MKAATHLNGLTSHRTLKRIDSYGWLEAEDQVAQEEPLEIKFRIGSDKEKSAGIVMRTPVHDDWLAVGFLYSEGILHDRRWINGIEGVSIEGKAQDNIVTVNIDPRNGSFDPDYRERFVNSSCGICGKSTINGIFLRMGKIKRDNIKIDPGVIVSLPVIMKGMQQLFSKTGGIHAAALFSADGKPIVTAEDIGRHNAVDKVVGFSLIEGIDTSTLILQVSGRAGFEIVEKAAIAGIPVICSVSAPSSLAIEVCESLGLTLICFVRGSSFNVYTHAERIMI.

Cys-122 serves as the catalytic Cysteine persulfide intermediate.

Belongs to the FdhD family.

The protein resides in the cytoplasm. Its function is as follows. Required for formate dehydrogenase (FDH) activity. Acts as a sulfur carrier protein that transfers sulfur from IscS to the molybdenum cofactor prior to its insertion into FDH. The polypeptide is Sulfur carrier protein FdhD (Thermoplasma volcanium (strain ATCC 51530 / DSM 4299 / JCM 9571 / NBRC 15438 / GSS1)).